Here is a 279-residue protein sequence, read N- to C-terminus: Replication factor A protein 2 (279 aa).

A disordered region spans residues 26–47 (GAGFNEYDQSSQPSVDRQQGAG). Polar residues predominate over residues 32 to 46 (YDQSSQPSVDRQQGA). A DNA-binding region (OB) is located at residues 80-140 (VTFVGVLRNI…GNIKIFSGKI (61 aa)).

It belongs to the replication factor A protein 2 family. As to quaternary structure, heterotrimer of 68, 30, and 12 kDa chains. Post-translationally, phosphorylated in a cell cycle-dependent manner. Hypophosphorylated in G1, becomes phosphorylated at the G1/S boundary, it is maintained in this state through the M phase.

It localises to the nucleus. Functionally, binds to single-stranded sequences. The chain is Replication factor A protein 2 (ssb2) from Schizosaccharomyces pombe (strain 972 / ATCC 24843) (Fission yeast).